The sequence spans 511 residues: Caspase-8 (511 aa).

A propeptide spanning residues 1-242 is cleaved from the precursor; it reads MSGHNILTQL…MDGNGIANES (242 aa). Catalysis depends on residues histidine 352 and cysteine 393. The propeptide occupies 406-415; it reads KINASTKSPC.

It belongs to the peptidase C14A family. Heterotetramer that consists of two anti-parallel arranged heterodimers, each one formed by a 15 kDa (caspase-8 subunit p15) and a 10 kDa (caspase-8 subunit p10) subunit. Interacts with the N-terminus of Fadd.

Its subcellular location is the cytoplasm. The catalysed reaction is Strict requirement for Asp at position P1 and has a preferred cleavage sequence of (Leu/Asp/Val)-Glu-Thr-Asp-|-(Gly/Ser/Ala).. Functionally, effector of the programmed cell death (PCD) activators rpr, grim and W. May play an apoptotic role in the germline as well as soma. Role in immune response, required to resist Gram-negative bacterial infections by regulating DptA. Fadd interacts with Dredd, Fadd promotes cleavage of Dredd and is necessary and sufficient for enhancing Dredd-induced apoptosis. The polypeptide is Caspase-8 (Drosophila pseudoobscura pseudoobscura (Fruit fly)).